We begin with the raw amino-acid sequence, 343 residues long: GTPase Obg (343 aa).

One can recognise an Obg domain in the interval 1-159 (MKFVDSASIF…LQLDMELKLM (159 aa)). The disordered stretch occupies residues 121 to 144 (GHGGRGNQHFATSTNQAPRRSEPG). Residues 129–138 (HFATSTNQAP) are compositionally biased toward polar residues. The OBG-type G domain maps to 160–323 (ADVGLVGFPN…LKDELWREVS (164 aa)). GTP contacts are provided by residues 166 to 173 (GFPNAGKS), 191 to 195 (FTTLV), 213 to 216 (DIPG), 280 to 283 (TKMD), and 304 to 306 (SSV). Ser-173 and Thr-193 together coordinate Mg(2+). The segment at 322–343 (VSMRDRPEESSDPEGEGDGGTP) is disordered. Over residues 331 to 343 (SSDPEGEGDGGTP) the composition is skewed to acidic residues.

Belongs to the TRAFAC class OBG-HflX-like GTPase superfamily. OBG GTPase family. Monomer. Mg(2+) serves as cofactor.

It localises to the cytoplasm. An essential GTPase which binds GTP, GDP and possibly (p)ppGpp with moderate affinity, with high nucleotide exchange rates and a fairly low GTP hydrolysis rate. Plays a role in control of the cell cycle, stress response, ribosome biogenesis and in those bacteria that undergo differentiation, in morphogenesis control. This chain is GTPase Obg, found in Chlorobium luteolum (strain DSM 273 / BCRC 81028 / 2530) (Pelodictyon luteolum).